A 69-amino-acid polypeptide reads, in one-letter code: uncharacterized protein (69 aa).

This is an uncharacterized protein from Homo sapiens (Human).